The following is a 370-amino-acid chain: Protein SHI RELATED SEQUENCE 1 (370 aa).

The interval 1-37 (MAGFFSLDGGGGGGGGGGNNQEDHRSNTNPPPPVSEA) is disordered. Over residues 8–19 (DGGGGGGGGGGN) the composition is skewed to gly residues. Zn(2+) is bound by residues Cys-144, Cys-147, Cys-155, Cys-160, Cys-164, and Cys-171. Positions 144–171 (CQDCGNQAKKDCSHMRCRTCCKSRGFEC) form a DNA-binding region, zn(2)-C6 fungal-type; degenerate. The Required for homo- and heterodimerization motif lies at 271-274 (IGGH).

Belongs to the SHI protein family. As to quaternary structure, forms homodimers and heterodimers with LRP1. As to expression, expressed in flowers, seeds and seedlings.

The protein resides in the nucleus. Its function is as follows. Transcription activator that binds DNA on 5'-ACTCTAC-3' and promotes auxin homeostasis-regulating gene expression (e.g. YUC genes), as well as genes affecting stamen development, cell expansion and timing of flowering. Synergistically with other SHI-related proteins, regulates gynoecium, stamen and leaf development in a dose-dependent manner, controlling apical-basal patterning. Promotes style and stigma formation, and influences vascular development during gynoecium development. May also have a role in the formation and/or maintenance of the shoot apical meristem (SAM). The sequence is that of Protein SHI RELATED SEQUENCE 1 (SRS1) from Arabidopsis thaliana (Mouse-ear cress).